The following is a 336-amino-acid chain: Homeobox-leucine zipper protein HAT14 (336 aa).

Disordered regions lie at residues 53–141 and 160–194; these read RSLS…PDSV and SNKRDIDDEVERSASRASNEDNDDENGSTRKKLRL. Residues 64 to 81 are compositionally biased toward basic and acidic residues; that stretch reads EDEKKKPAPRAKKSDEFR. A compositionally biased stretch (acidic residues) spans 120-129; it reads VEEEEEEEEA. Residues 130–141 show a composition bias toward low complexity; that stretch reads VPSMSVSPPDSV. Positions 160-173 are enriched in basic and acidic residues; it reads SNKRDIDDEVERSA. A DNA-binding region (homeobox) is located at residues 187-246; it reads STRKKLRLSKDQSAFLEDSFKEHSTLNPKQKIALAKQLNLRPRQVEVWFQNRRARTKLKQ. The interval 254-275 is leucine-zipper; it reads LKRCCESLTEENRRLQKEVKEL.

It belongs to the HD-ZIP homeobox family. Class II subfamily.

It is found in the nucleus. Probable transcription factor. The polypeptide is Homeobox-leucine zipper protein HAT14 (HAT14) (Arabidopsis thaliana (Mouse-ear cress)).